Consider the following 643-residue polypeptide: Phosphomethylpyrimidine synthase (643 aa).

Substrate is bound by residues Asn248, Met277, Tyr306, His342, 362–364, 403–406, and Glu442; these read SRG and DGLR. A Zn(2+)-binding site is contributed by His446. Tyr469 contacts substrate. His510 is a Zn(2+) binding site. Residues Cys590, Cys593, and Cys598 each contribute to the [4Fe-4S] cluster site.

The protein belongs to the ThiC family. In terms of assembly, homodimer. Requires [4Fe-4S] cluster as cofactor.

The catalysed reaction is 5-amino-1-(5-phospho-beta-D-ribosyl)imidazole + S-adenosyl-L-methionine = 4-amino-2-methyl-5-(phosphooxymethyl)pyrimidine + CO + 5'-deoxyadenosine + formate + L-methionine + 3 H(+). It participates in cofactor biosynthesis; thiamine diphosphate biosynthesis. Functionally, catalyzes the synthesis of the hydroxymethylpyrimidine phosphate (HMP-P) moiety of thiamine from aminoimidazole ribotide (AIR) in a radical S-adenosyl-L-methionine (SAM)-dependent reaction. The chain is Phosphomethylpyrimidine synthase from Paraburkholderia xenovorans (strain LB400).